Reading from the N-terminus, the 805-residue chain is G-type lectin S-receptor-like serine/threonine-protein kinase SD1-29 (805 aa).

Residues 1-21 (MGMVLFACLLLLIIFPTCGYA) form the signal peptide. Residues 22–141 (AINTSSPLSI…VSGNKLWQSF (120 aa)) form the Bulb-type lectin domain. At 22-428 (AINTSSPLSI…SELAGSSRRK (407 aa)) the chain is on the extracellular side. 5 N-linked (GlcNAc...) asparagine glycosylation sites follow: Asn24, Asn50, Asn85, Asn91, and Asn248. Positions 277–313 (PENPCDLYGRCGPYGLCVRSDPPKCECLKGFVPKSDE) constitute an EGF-like domain. Disulfide bonds link Cys281-Cys293 and Cys287-Cys301. N-linked (GlcNAc...) asparagine glycosylation is found at Asn319 and Asn378. A PAN domain is found at 332–418 (CQAKSSMKTQ…GEFLFIRLAS (87 aa)). Intrachain disulfides connect Cys371–Cys392 and Cys375–Cys381. The helical transmembrane segment at 429 to 449 (IIVGTTVSLSIFLILVFAAIM) threads the bilayer. The Cytoplasmic portion of the chain corresponds to 450–805 (LWRYRAKQND…EMTESMIQGR (356 aa)). The region spanning 488-773 (FSPSNKLGQG…DLPVPKQPIF (286 aa)) is the Protein kinase domain. ATP contacts are provided by residues 494–502 (LGQGGFGPV) and Lys516. 2 positions are modified to phosphoserine: Ser522 and Ser537. Positions 577-594 (CLKFELDWPKRFNIIQGI) are caM-binding. The residue at position 600 (Tyr600) is a Phosphotyrosine. The active-site Proton acceptor is Asp613. 2 positions are modified to phosphoserine: Ser617 and Ser630. Position 647 is a phosphothreonine (Thr647). Residues Ser690 and Ser793 each carry the phosphoserine modification.

Belongs to the protein kinase superfamily. Ser/Thr protein kinase family. Interacts with PUB9, PUB13, PUB14, PUB29, PUB38, PUB44 and PUB45. Interacts with PBL34, PBL35 and PBL36. Autophosphorylated at Tyr-600. Autophosphorylation at Tyr-600 is required for downstream phosphorylation of the receptor-like cytoplasmic kinase PBL34, PBL35 and PBL36, and activation of plant immunity.

Its subcellular location is the cell membrane. The enzyme catalyses L-seryl-[protein] + ATP = O-phospho-L-seryl-[protein] + ADP + H(+). The catalysed reaction is L-threonyl-[protein] + ATP = O-phospho-L-threonyl-[protein] + ADP + H(+). It carries out the reaction L-tyrosyl-[protein] + ATP = O-phospho-L-tyrosyl-[protein] + ADP + H(+). Functionally, S-domain receptor protein kinase involved in lipopolysaccharide (LPS) sensing. Specifically detects LPS of Pseudomonas and Xanthomonas species. LPS are major components of the outer membrane of Gram-negative bacteria and are important microbe-associated molecular patterns (MAMPs) that trigger biphasic production of reactive oxygen species (ROS) and immune responses in plants. Seems to be only partially associated with the second LPS-triggered ROS burst. Mediates defense signaling in response to the medium-chain 3-hydroxy fatty acid 3-OH-C10:0, a pathogen-associated molecular pattern (PAMP) which induces autophosphorylation at Tyr-600. Autophosphorylation at Tyr-600 is required for downstream phosphorylation of the receptor-like cytoplasmic kinase PBL34, PBL35 and PBL36, and activation of plant immunity. Its function is as follows. (Microbial infection) Targeted by the bacterial type III effector protein tyrosine phosphatase HopAO1 from Pseudomonas syringae. HopAO1 dephosphorylates Tyr-600, which suppresses the immune response. The sequence is that of G-type lectin S-receptor-like serine/threonine-protein kinase SD1-29 from Arabidopsis thaliana (Mouse-ear cress).